The sequence spans 179 residues: Cytochrome b6-f complex iron-sulfur subunit (179 aa).

The helical transmembrane segment at 20–42 (LLTFGTITGVAAGALYPIVKYFI) threads the bilayer. Positions 60–161 (GNDVIVSQFL…ANVTDNDKVV (102 aa)) constitute a Rieske domain. [2Fe-2S] cluster is bound by residues Cys-107, His-109, Cys-125, and His-128. A disulfide bridge links Cys-112 with Cys-127.

The protein belongs to the Rieske iron-sulfur protein family. As to quaternary structure, the 4 large subunits of the cytochrome b6-f complex are cytochrome b6, subunit IV (17 kDa polypeptide, PetD), cytochrome f and the Rieske protein, while the 4 small subunits are PetG, PetL, PetM and PetN. The complex functions as a dimer. [2Fe-2S] cluster is required as a cofactor.

It localises to the cellular thylakoid membrane. The catalysed reaction is 2 oxidized [plastocyanin] + a plastoquinol + 2 H(+)(in) = 2 reduced [plastocyanin] + a plastoquinone + 4 H(+)(out). Its function is as follows. Component of the cytochrome b6-f complex, which mediates electron transfer between photosystem II (PSII) and photosystem I (PSI), cyclic electron flow around PSI, and state transitions. The chain is Cytochrome b6-f complex iron-sulfur subunit from Microcystis aeruginosa (strain NIES-843 / IAM M-2473).